A 163-amino-acid chain; its full sequence is Putative 4-hydroxy-4-methyl-2-oxoglutarate aldolase (163 aa).

Substrate contacts are provided by residues 76 to 79 (GDML) and arginine 98. Aspartate 99 provides a ligand contact to a divalent metal cation.

Belongs to the class II aldolase/RraA-like family. Homotrimer. A divalent metal cation is required as a cofactor.

It catalyses the reaction 4-hydroxy-4-methyl-2-oxoglutarate = 2 pyruvate. The enzyme catalyses oxaloacetate + H(+) = pyruvate + CO2. Functionally, catalyzes the aldol cleavage of 4-hydroxy-4-methyl-2-oxoglutarate (HMG) into 2 molecules of pyruvate. Also contains a secondary oxaloacetate (OAA) decarboxylase activity due to the common pyruvate enolate transition state formed following C-C bond cleavage in the retro-aldol and decarboxylation reactions. The chain is Putative 4-hydroxy-4-methyl-2-oxoglutarate aldolase from Pseudomonas putida (strain ATCC 47054 / DSM 6125 / CFBP 8728 / NCIMB 11950 / KT2440).